Here is a 2291-residue protein sequence, read N- to C-terminus: Protein Ycf2 (2291 aa).

1645 to 1652 (GSIGTGRS) contacts ATP.

It belongs to the Ycf2 family.

The protein resides in the plastid. The protein localises to the chloroplast stroma. Functionally, probable ATPase of unknown function. Its presence in a non-photosynthetic plant (Epifagus virginiana) and experiments in tobacco indicate that it has an essential function which is probably not related to photosynthesis. The chain is Protein Ycf2 from Olimarabidopsis pumila (Dwarf rocket).